The sequence spans 303 residues: MTENVNEHTQGHLLGAADIRRIAADAGISPTKKFGQNFVIDPGTVRRIVREAGVTADDHVLEVGPGLGSLTLAILETGATMTAVEIDPPVAERLPKTIAEFMPDAVDRFRVVNRDALTVNPENLPDFKDDDSFTLVANLPYNVATPILLTLLERFDNLGTFLVMVQKEVADRLSEKPGSKIYGTPSVKLAWYGTAERVGVIGRNVFWPAPNVDSALVLFKRYPGGHTPAADNADGSVVDRETVFRLIDAAFGQRRKTLHAALKKIVPSEAFEKAGIDPTRRGETLTIDEFVALARALDEVFAS.

Residues asparagine 37, valine 39, glycine 64, glutamate 85, aspartate 115, and asparagine 138 each coordinate S-adenosyl-L-methionine.

It belongs to the class I-like SAM-binding methyltransferase superfamily. rRNA adenine N(6)-methyltransferase family. RsmA subfamily.

The protein localises to the cytoplasm. It catalyses the reaction adenosine(1518)/adenosine(1519) in 16S rRNA + 4 S-adenosyl-L-methionine = N(6)-dimethyladenosine(1518)/N(6)-dimethyladenosine(1519) in 16S rRNA + 4 S-adenosyl-L-homocysteine + 4 H(+). Its function is as follows. Specifically dimethylates two adjacent adenosines (A1518 and A1519) in the loop of a conserved hairpin near the 3'-end of 16S rRNA in the 30S particle. May play a critical role in biogenesis of 30S subunits. The polypeptide is Ribosomal RNA small subunit methyltransferase A (Bifidobacterium adolescentis (strain ATCC 15703 / DSM 20083 / NCTC 11814 / E194a)).